The chain runs to 437 residues: Protein translocase subunit SecY (437 aa).

The next 10 helical transmembrane spans lie at Leu-19–Val-39, Leu-69–Leu-89, Val-122–Phe-142, Ile-157–Leu-177, Gly-189–Ile-209, Trp-219–Val-239, Gly-275–Phe-295, His-318–Phe-338, Gly-378–Ala-398, and Gln-400–Val-420.

The protein belongs to the SecY/SEC61-alpha family. In terms of assembly, component of the Sec protein translocase complex. Heterotrimer consisting of SecY, SecE and SecG subunits. The heterotrimers can form oligomers, although 1 heterotrimer is thought to be able to translocate proteins. Interacts with the ribosome. Interacts with SecDF, and other proteins may be involved. Interacts with SecA.

Its subcellular location is the cell membrane. The central subunit of the protein translocation channel SecYEG. Consists of two halves formed by TMs 1-5 and 6-10. These two domains form a lateral gate at the front which open onto the bilayer between TMs 2 and 7, and are clamped together by SecE at the back. The channel is closed by both a pore ring composed of hydrophobic SecY resides and a short helix (helix 2A) on the extracellular side of the membrane which forms a plug. The plug probably moves laterally to allow the channel to open. The ring and the pore may move independently. The polypeptide is Protein translocase subunit SecY (Streptomyces coelicolor (strain ATCC BAA-471 / A3(2) / M145)).